The sequence spans 847 residues: Alpha-glucuronidase A (847 aa).

Residues 1–22 (MRSFLLLTALLGVAAVAEDGLA) form the signal peptide. 13 N-linked (GlcNAc...) asparagine glycosylation sites follow: N48, N78, N227, N315, N349, N457, N472, N534, N583, N689, N738, N739, and N769.

This sequence belongs to the glycosyl hydrolase 67 family.

It localises to the secreted. It catalyses the reaction an alpha-D-glucuronoside + H2O = D-glucuronate + an alcohol. In terms of biological role, alpha-glucuronidase involved in the hydrolysis of xylan, a major structural heterogeneous polysaccharide found in plant biomass representing the second most abundant polysaccharide in the biosphere, after cellulose. Releases 4-O-methylglucuronic acid from xylan. The sequence is that of Alpha-glucuronidase A (aguA) from Emericella nidulans (strain FGSC A4 / ATCC 38163 / CBS 112.46 / NRRL 194 / M139) (Aspergillus nidulans).